The chain runs to 787 residues: ATP-dependent zinc metalloprotease FtsH (787 aa).

Residues 1–5 (MNRKN) are Cytoplasmic-facing. Residues 6–26 (VIRMVTAIAVVVLLGWSFFYF) form a helical membrane-spanning segment. Residues 27–110 (SDDTRGYKFV…KVTTAVNEGS (84 aa)) are Extracellular-facing. A helical transmembrane segment spans residues 111–131 (ILGELLVYVLPLLLLVGLFVM). At 132–787 (FSRMQGGARM…VSPSNPPAHG (656 aa)) the chain is on the cytoplasmic side. 203–210 (GPPGTGKT) is an ATP binding site. Residue histidine 425 participates in Zn(2+) binding. Residue glutamate 426 is part of the active site. Zn(2+) contacts are provided by histidine 429 and aspartate 501. Residues 616–787 (DFGGRIPSDK…VSPSNPPAHG (172 aa)) form a disordered region. Low complexity-rich tracts occupy residues 650–671 (AFKA…AAQS) and 700–709 (YGAPPGWHAP). Residues 710–720 (GWPPQQPPDYW) are compositionally biased toward pro residues. Over residues 721–732 (YPPEQQPSQSPY) the composition is skewed to low complexity. A compositionally biased stretch (pro residues) spans 733 to 762 (WPQPAPSYPGQAPPPYPSYPPCPSYPPPGQ).

The protein in the central section; belongs to the AAA ATPase family. In the C-terminal section; belongs to the peptidase M41 family. In terms of assembly, homohexamer. Requires Zn(2+) as cofactor.

It localises to the cell membrane. Its function is as follows. Acts as a processive, ATP-dependent zinc metallopeptidase for both cytoplasmic and membrane proteins. Plays a role in the quality control of integral membrane proteins. In Mycobacterium leprae (strain TN), this protein is ATP-dependent zinc metalloprotease FtsH.